We begin with the raw amino-acid sequence, 376 residues long: Succinyl-diaminopimelate desuccinylase (376 aa).

H67 lines the Zn(2+) pocket. Residue D69 is part of the active site. Residue D100 participates in Zn(2+) binding. The Proton acceptor role is filled by E134. Residues E135, E163, and H349 each contribute to the Zn(2+) site.

It belongs to the peptidase M20A family. DapE subfamily. Homodimer. Zn(2+) is required as a cofactor. Requires Co(2+) as cofactor.

It carries out the reaction N-succinyl-(2S,6S)-2,6-diaminopimelate + H2O = (2S,6S)-2,6-diaminopimelate + succinate. It functions in the pathway amino-acid biosynthesis; L-lysine biosynthesis via DAP pathway; LL-2,6-diaminopimelate from (S)-tetrahydrodipicolinate (succinylase route): step 3/3. Catalyzes the hydrolysis of N-succinyl-L,L-diaminopimelic acid (SDAP), forming succinate and LL-2,6-diaminopimelate (DAP), an intermediate involved in the bacterial biosynthesis of lysine and meso-diaminopimelic acid, an essential component of bacterial cell walls. The sequence is that of Succinyl-diaminopimelate desuccinylase from Idiomarina loihiensis (strain ATCC BAA-735 / DSM 15497 / L2-TR).